The sequence spans 353 residues: Mitogen-activated protein kinase mpkB (353 aa).

Positions 21–309 (YEIQDVIGEG…VEEALRHPYL (289 aa)) constitute a Protein kinase domain. ATP-binding positions include 27 to 35 (IGEGAYGVV) and Lys-50. Asp-145 serves as the catalytic Proton acceptor.

The protein belongs to the protein kinase superfamily. Ser/Thr protein kinase family. MAP kinase subfamily. Requires Mg(2+) as cofactor.

The protein localises to the nucleus. It carries out the reaction L-seryl-[protein] + ATP = O-phospho-L-seryl-[protein] + ADP + H(+). It catalyses the reaction L-threonyl-[protein] + ATP = O-phospho-L-threonyl-[protein] + ADP + H(+). With respect to regulation, activated by threonine and tyrosine phosphorylation. Its function is as follows. Mitogen-activated protein kinase (MAPK) that plays a role in conidiation and regulation of secondary metabolite biosynthesis. Acts as a repressor of dihydroxynaphthalene (DHN)-melanin production. The chain is Mitogen-activated protein kinase mpkB from Aspergillus fumigatus (strain CBS 144.89 / FGSC A1163 / CEA10) (Neosartorya fumigata).